A 225-amino-acid polypeptide reads, in one-letter code: 7-carboxy-7-deazaguanine synthase (225 aa).

Substrate-binding positions include leucine 14 to glycine 16 and arginine 29. The Radical SAM core domain maps to histidine 20 to leucine 225. 3 residues coordinate [4Fe-4S] cluster: cysteine 33, cysteine 37, and cysteine 40. Threonine 42 provides a ligand contact to Mg(2+). Substrate is bound at residue threonine 77. Residues glycine 79 and serine 127 to lysine 129 each bind S-adenosyl-L-methionine.

Belongs to the radical SAM superfamily. 7-carboxy-7-deazaguanine synthase family. In terms of assembly, homodimer. [4Fe-4S] cluster is required as a cofactor. S-adenosyl-L-methionine serves as cofactor. The cofactor is Mg(2+).

The catalysed reaction is 6-carboxy-5,6,7,8-tetrahydropterin + H(+) = 7-carboxy-7-deazaguanine + NH4(+). It participates in purine metabolism; 7-cyano-7-deazaguanine biosynthesis. Its function is as follows. Catalyzes the complex heterocyclic radical-mediated conversion of 6-carboxy-5,6,7,8-tetrahydropterin (CPH4) to 7-carboxy-7-deazaguanine (CDG), a step common to the biosynthetic pathways of all 7-deazapurine-containing compounds. This Prochlorococcus marinus (strain SARG / CCMP1375 / SS120) protein is 7-carboxy-7-deazaguanine synthase.